The following is a 748-amino-acid chain: MQVMTKPITLAPAFIAEVKKEIKPHWGELGWVTYKRTYARWLPDAQRTENWDETVKRVVEGNINLDPRLHTANPDPKVVETLQKEARNLFKLIYGLAGTPSGRNLWISGTDYQKRNGDALNNCWFIAIRPQPYGQSHIVPEDYPASQPAVSMPYSFMFDELMKGGGVGFSVTKDNIAKLPPVATKLELTVVIGRNSASYADSLKMGAVDRDEWEKAHAGEQADHCALPDTREGWVLANAKVIDHHFAATNPSGQTKLVLDITNIRPKGARIHGFGGTASGPMPLIEMLLDINKLLNARVGQHLTAVDATDIGNLIGKTVVAGNVRRSAEMSLGSADDEDFITMKQDQKQLYHHRWASNNSVAINTQFDAYSPIALAIAKNGEPGIVNLELSRRFGRIADRENAENDPDVEGTNPCGEISLANGEPCNLFEVFPVVAVEQGWKLKQAFTLAARFAKRVTFSHYDWQVSRDIIKKNRRIGVSMSGIQDWFLNDFGRRVVSGFESVVDPQTGKMVQKPIYDPEIKQAVDGLYHTVVDADQAYSDALGCEPSRKHTTVKPSGTVAKLAGVSEGMHFHYAGYLIQRIRFQGNDPLLPALQACGYHIEPDVYTKGTMVVEFPIRAAHADDPAFASAGTVSIAEQIATQAFLQTYWSDNAVSCTVTFQPKEADQIAGLLSQYRHVIKSTSMLPYVGAGFKQAPKEPIDVKTYKQKCAAIHGSVAAVFAVQNADHDQKDLELVDQTDCAGGACPIK.

A disulfide bridge links cysteine 123 with cysteine 426. Residues 151 to 162 (SMPYSFMFDELM) are effector region-1. The tract at residues 172–320 (TKDNIAKLPP…IGNLIGKTVV (149 aa)) is effector region-2. Active-site residues include cysteine 415 and glutamate 417. The segment at 572–633 (FHYAGYLIQR…DPAFASAGTV (62 aa)) is adenosylcobalamin-binding-1. An adenosylcobalamin-binding-2 region spans residues 692–733 (FKQAPKEPIDVKTYKQKCAAIHGSVAAVFAVQNADHDQKDLE).

The protein belongs to the class II ribonucleoside-triphosphate reductase family. In terms of assembly, monomer. The cofactor is adenosylcob(III)alamin.

The catalysed reaction is a 2'-deoxyribonucleoside 5'-triphosphate + [thioredoxin]-disulfide + H2O = a ribonucleoside 5'-triphosphate + [thioredoxin]-dithiol. Allosterically regulated by ATP and dNTP. The polypeptide is Adenosylcobalamin-dependent ribonucleoside-triphosphate reductase (rtpR) (Lacticaseibacillus paracasei (strain ATCC 334 / BCRC 17002 / CCUG 31169 / CIP 107868 / KCTC 3260 / NRRL B-441) (Lactobacillus paracasei)).